Here is a 392-residue protein sequence, read N- to C-terminus: MSSKVFLRDKVHVNVGTIGHVDHGKTTLTAAITKILSTKGLAENKSYDQIDKTKEEKERGITINTTHVSYETEKRHYAHVDCPGHADYVKNMITGAAQMDAGILVVSAYHGVMPQTREHVLLAGQVGISKLIVFLNKCDLVKEEEWIHLVEMEVRELLNEYKFDGDKTPFVRGSALKALEGTDVEGINKLLEVLDEYIEDPIRDVEKPFLMPVEGVHTITGRGTVATGRVERGKIKISEEVEIIGLKETKKAIITGLEMFKKELDFAQAGDNVGILLRGITRDQIERGQVLAKPGSLNAYHKFLSQVYILTQQEGGRHTAFFSNYRPQFYFRTTDVTGFIKLKKDVKMVLPGDRTELIVELNHPIAIEAGTKFSIREGGRTIGAGTVTEIIE.

The region spanning 10-202 (KVHVNVGTIG…VLDEYIEDPI (193 aa)) is the tr-type G domain. Positions 19–26 (GHVDHGKT) are G1. A GTP-binding site is contributed by 19-26 (GHVDHGKT). Mg(2+) is bound at residue Thr-26. The interval 60 to 64 (GITIN) is G2. The interval 81-84 (DCPG) is G3. Residues 81–85 (DCPGH) and 136–139 (NKCD) contribute to the GTP site. A G4 region spans residues 136–139 (NKCD). Residues 174 to 176 (SAL) form a G5 region.

This sequence belongs to the TRAFAC class translation factor GTPase superfamily. Classic translation factor GTPase family. EF-Tu/EF-1A subfamily. In terms of assembly, monomer.

Its subcellular location is the cytoplasm. It carries out the reaction GTP + H2O = GDP + phosphate + H(+). GTP hydrolase that promotes the GTP-dependent binding of aminoacyl-tRNA to the A-site of ribosomes during protein biosynthesis. This Phytoplasma mali (strain AT) protein is Elongation factor Tu.